The following is a 130-amino-acid chain: Small ribosomal subunit protein uS9 (130 aa).

The tract at residues 105–130 (TRDPRMKERKKYGLKKARRAPQFSKR) is disordered. Residues 111–130 (KERKKYGLKKARRAPQFSKR) are compositionally biased toward basic residues.

This sequence belongs to the universal ribosomal protein uS9 family.

This is Small ribosomal subunit protein uS9 from Acetivibrio thermocellus (strain ATCC 27405 / DSM 1237 / JCM 9322 / NBRC 103400 / NCIMB 10682 / NRRL B-4536 / VPI 7372) (Clostridium thermocellum).